The chain runs to 142 residues: Large ribosomal subunit protein uL13 (142 aa).

It belongs to the universal ribosomal protein uL13 family. As to quaternary structure, part of the 50S ribosomal subunit.

This protein is one of the early assembly proteins of the 50S ribosomal subunit, although it is not seen to bind rRNA by itself. It is important during the early stages of 50S assembly. The chain is Large ribosomal subunit protein uL13 from Janthinobacterium sp. (strain Marseille) (Minibacterium massiliensis).